We begin with the raw amino-acid sequence, 333 residues long: Transcription factor TGA2.2 (333 aa).

Residues 1–14 show a composition bias toward polar residues; that stretch reads MADASSRTDTSTVL. Residues 1–48 form a disordered region; that stretch reads MADASSRTDTSTVLDTDDKNQMVDGQSGAIVPSNSSDRSDRSDKPMDQ. Residues 37–48 are compositionally biased toward basic and acidic residues; the sequence is DRSDRSDKPMDQ. Residues 47–91 enclose the bZIP domain; the sequence is DQKVLRRLAQNREAARKSRLRKKAYVQQLESSKLKLASLEQEINK. Residues 49–69 are basic motif; sequence KVLRRLAQNREAARKSRLRKK. Residues 75–89 form a leucine-zipper region; the sequence is LESSKLKLASLEQEI. The DOG1 domain maps to 114–330; sequence AMTFDLEYAR…RALSSLWLAR (217 aa).

This sequence belongs to the bZIP family. Interacts with NPR1/NH1. Interacts with NPR3/NH3.

The protein localises to the nucleus. Its function is as follows. Transcriptional regulator involved in defense response. The chain is Transcription factor TGA2.2 from Oryza sativa subsp. japonica (Rice).